A 194-amino-acid chain; its full sequence is Thymidylate kinase (194 aa).

Residue 7–14 (GVDCVGKS) coordinates ATP.

Belongs to the thymidylate kinase family.

It catalyses the reaction dTMP + ATP = dTDP + ADP. Functionally, phosphorylation of dTMP to form dTDP in both de novo and salvage pathways of dTTP synthesis. The protein is Thymidylate kinase of Campylobacter lari (strain RM2100 / D67 / ATCC BAA-1060).